The following is a 110-amino-acid chain: Tyrosine-protein phosphatase 3 (110 aa).

The region spanning 1–110 (QKCATIVMVT…NPPHSGPIVV (110 aa)) is the Tyrosine-protein phosphatase domain. Aspartate 80 is a substrate binding site.

Belongs to the protein-tyrosine phosphatase family.

It catalyses the reaction O-phospho-L-tyrosyl-[protein] + H2O = L-tyrosyl-[protein] + phosphate. This chain is Tyrosine-protein phosphatase 3 (STY-3), found in Styela plicata (Wrinkled sea squirt).